A 142-amino-acid polypeptide reads, in one-letter code: Large ribosomal subunit protein uL22c (142 aa).

It belongs to the universal ribosomal protein uL22 family. In terms of assembly, part of the 50S ribosomal subunit.

It localises to the plastid. The protein localises to the chloroplast. In terms of biological role, this protein binds specifically to 23S rRNA. Functionally, the globular domain of the protein is located near the polypeptide exit tunnel on the outside of the subunit, while an extended beta-hairpin is found that lines the wall of the exit tunnel in the center of the 70S ribosome. The polypeptide is Large ribosomal subunit protein uL22c (rpl22) (Picea abies (Norway spruce)).